The primary structure comprises 297 residues: MSSLAAPQTGLLRQYLVLTKPRVTQLAVFCAVIGMFLAAPGMPDLSHVVFGTLGIWLLAAAAFAINCLIEQEVDARMLRTARRATARGTISDIQVLSLSGLLGGAGMLVLYHLVNPLTMWLTFATFVGYAIIYTVILKPRTPQNIVIGGLSGAMPPALGWAAVADSVPAEAWVLVLIIFIWTPPHFWALALYRNNDYIKAGLPMLPVTRGQQFTRLHILLYSFALLATTLLPYAIRMSGALYLASALALGGMFVWYAWRLYREYSDALARRLFRFSILYLALLFGALLIDHWVGLLR.

9 consecutive transmembrane segments (helical) span residues 23–43 (VTQL…PGMP), 49–69 (VFGT…NCLI), 93–113 (IQVL…LYHL), 117–137 (LTMW…TVIL), 144–164 (NIVI…AAVA), 171–191 (AWVL…ALAL), 215–235 (RLHI…PYAI), 238–258 (SGAL…WYAW), and 275–295 (FSIL…WVGL).

The protein belongs to the UbiA prenyltransferase family. Protoheme IX farnesyltransferase subfamily.

Its subcellular location is the cell inner membrane. It carries out the reaction heme b + (2E,6E)-farnesyl diphosphate + H2O = Fe(II)-heme o + diphosphate. It functions in the pathway porphyrin-containing compound metabolism; heme O biosynthesis; heme O from protoheme: step 1/1. Its function is as follows. Converts heme B (protoheme IX) to heme O by substitution of the vinyl group on carbon 2 of heme B porphyrin ring with a hydroxyethyl farnesyl side group. The sequence is that of Protoheme IX farnesyltransferase from Bordetella pertussis (strain Tohama I / ATCC BAA-589 / NCTC 13251).